We begin with the raw amino-acid sequence, 483 residues long: Probable glycosyltransferase 6 (483 aa).

Residues 1-40 are Cytoplasmic-facing; that stretch reads MAASETAPFGVSAASKGGGGVAGARAQHGQLAVAGRVHDA. Residues 41-61 traverse the membrane as a helical; Signal-anchor for type II membrane protein segment; sequence LVFAAGAVAAVLVLLATASFL. At 62–483 the chain is on the lumenal side; that stretch reads SPMPVTNLVA…PLPFDYPAAR (422 aa). N144 is a glycosylation site (N-linked (GlcNAc...) asparagine).

Belongs to the glycosyltransferase 34 family.

It localises to the golgi apparatus membrane. Its function is as follows. Probable glycosyltransferase that may be involved in the biosynthesis of xyloglucan. This chain is Probable glycosyltransferase 6, found in Oryza sativa subsp. indica (Rice).